The primary structure comprises 812 residues: Fibrous sheath CABYR-binding protein (812 aa).

The segment at 1 to 66 (MEESDEPEQP…SIGNIPGGKA (66 aa)) is disordered. 6 positions are modified to phosphoserine: Ser25, Ser57, Ser125, Ser133, Ser184, and Ser273. Disordered regions lie at residues 269–333 (IQAP…PKGT), 367–388 (DSGRAESTTVEEATGEVQPPLS), 424–547 (FEDQ…PPSL), and 672–741 (PAEE…PSVK). Positions 275–286 (AKETSAAETTAK) are enriched in low complexity. Residues 488–501 (EVPPLPTEEWPLPP) are compositionally biased toward pro residues. Over residues 502-513 (VTEESPAEVTPP) the composition is skewed to low complexity. The segment covering 514–528 (ETEEGPIEPAEEGPE) has biased composition (acidic residues).

In terms of assembly, interacts with CABYR.

Its subcellular location is the cell projection. The protein resides in the cilium. It localises to the flagellum. Its function is as follows. May be involved in the later stages of fibrous sheath biogenesis. Binds calcium. The protein is Fibrous sheath CABYR-binding protein of Rattus norvegicus (Rat).